The primary structure comprises 165 residues: Destrin (165 aa).

Ala-2 carries the post-translational modification N-acetylalanine. An ADF-H domain is found at 4–153; sequence GVQVADEVCR…NRACIAEKLG (150 aa). Residues 30–34 carry the Nuclear localization signal motif; sequence KKRKK.

It belongs to the actin-binding proteins ADF family.

Its function is as follows. Actin-depolymerizing protein. Severs actin filaments (F-actin) and binds to actin monomers (G-actin). Acts in a pH-independent manner. In Gallus gallus (Chicken), this protein is Destrin (DSTN).